The sequence spans 130 residues: Histone H2A type 1-C (130 aa).

The disordered stretch occupies residues Met-1–Ala-22. The residue at position 2 (Ser-2) is an N-acetylserine. Ser-2 is subject to Phosphoserine; by RPS6KA5. The residue at position 4 (Arg-4) is a Citrulline; alternate. Arg-4 is subject to Symmetric dimethylarginine; by PRMT5; alternate. An N6-(2-hydroxyisobutyryl)lysine; alternate mark is found at Lys-6 and Lys-10. Lys-6 carries the N6-acetyllysine; alternate modification. The span at Gln-7 to Ser-19 shows a compositional bias: basic residues. Residues Lys-10 and Lys-14 each carry the N6-(beta-hydroxybutyryl)lysine; alternate modification. An N6-lactoyllysine; alternate modification is found at Lys-10. The residue at position 10 (Lys-10) is an N6-succinyllysine; alternate. Lys-14 is covalently cross-linked (Glycyl lysine isopeptide (Lys-Gly) (interchain with G-Cter in ubiquitin); alternate). Lys-16 participates in a covalent cross-link: Glycyl lysine isopeptide (Lys-Gly) (interchain with G-Cter in ubiquitin). Lys-37 is subject to N6-(2-hydroxyisobutyryl)lysine; alternate. Residue Lys-37 is modified to N6-(beta-hydroxybutyryl)lysine; alternate. N6-crotonyllysine; alternate is present on Lys-37. An N6-(2-hydroxyisobutyryl)lysine mark is found at Lys-75 and Lys-76. Lys-96 is subject to N6-(2-hydroxyisobutyryl)lysine; alternate. An N6-(beta-hydroxybutyryl)lysine; alternate modification is found at Lys-96. Residue Lys-96 is modified to N6-succinyllysine; alternate. Lys-96 is modified (N6-glutaryllysine; alternate). Gln-105 carries the post-translational modification N5-methylglutamine. Lys-119 bears the N6-(2-hydroxyisobutyryl)lysine; alternate mark. N6-(beta-hydroxybutyryl)lysine; alternate is present on Lys-119. Lys-119 and Lys-120 each carry N6-crotonyllysine; alternate. N6-glutaryllysine; alternate occurs at positions 119 and 120. Residue Lys-120 forms a Glycyl lysine isopeptide (Lys-Gly) (interchain with G-Cter in ubiquitin); alternate linkage. Phosphothreonine; by DCAF1 is present on Thr-121. An N6-crotonyllysine; alternate modification is found at Lys-126. An N6-glutaryllysine; alternate modification is found at Lys-126.

It belongs to the histone H2A family. The nucleosome is a histone octamer containing two molecules each of H2A, H2B, H3 and H4 assembled in one H3-H4 heterotetramer and two H2A-H2B heterodimers. The octamer wraps approximately 147 bp of DNA. Deiminated on Arg-4 in granulocytes upon calcium entry. In terms of processing, monoubiquitination of Lys-120 (H2AK119Ub) by RING1, TRIM37 and RNF2/RING2 complex gives a specific tag for epigenetic transcriptional repression and participates in X chromosome inactivation of female mammals. It is involved in the initiation of both imprinted and random X inactivation. Ubiquitinated H2A is enriched in inactive X chromosome chromatin. Ubiquitination of H2A functions downstream of methylation of 'Lys-27' of histone H3 (H3K27me). H2AK119Ub by RNF2/RING2 can also be induced by ultraviolet and may be involved in DNA repair. Monoubiquitination of Lys-120 (H2AK119Ub) by TRIM37 may promote transformation of cells in a number of breast cancers. Following DNA double-strand breaks (DSBs), it is ubiquitinated through 'Lys-63' linkage of ubiquitin moieties by the E2 ligase UBE2N and the E3 ligases RNF8 and RNF168, leading to the recruitment of repair proteins to sites of DNA damage. Ubiquitination at Lys-14 and Lys-16 (H2AK13Ub and H2AK15Ub, respectively) in response to DNA damage is initiated by RNF168 that mediates monoubiquitination at these 2 sites, and 'Lys-63'-linked ubiquitin are then conjugated to monoubiquitin; RNF8 is able to extend 'Lys-63'-linked ubiquitin chains in vitro. Deubiquitinated by USP51 at Lys-14 and Lys-16 (H2AK13Ub and H2AK15Ub, respectively) after damaged DNA is repaired. H2AK119Ub and ionizing radiation-induced 'Lys-63'-linked ubiquitination (H2AK13Ub and H2AK15Ub) are distinct events. Post-translationally, phosphorylation on Ser-2 (H2AS1ph) is enhanced during mitosis. Phosphorylation on Ser-2 by RPS6KA5/MSK1 directly represses transcription. Acetylation of H3 inhibits Ser-2 phosphorylation by RPS6KA5/MSK1. Phosphorylation at Thr-121 (H2AT120ph) by DCAF1 is present in the regulatory region of many tumor suppresor genes and down-regulates their transcription. Glutamine methylation at Gln-105 (H2AQ104me) by FBL is specifically dedicated to polymerase I. It is present at 35S ribosomal DNA locus and impairs binding of the FACT complex. In terms of processing, symmetric dimethylation on Arg-4 by the PRDM1/PRMT5 complex may play a crucial role in the germ-cell lineage. Post-translationally, crotonylation (Kcr) is specifically present in male germ cells and marks testis-specific genes in post-meiotic cells, including X-linked genes that escape sex chromosome inactivation in haploid cells. Crotonylation marks active promoters and enhancers and confers resistance to transcriptional repressors. It is also associated with post-meiotically activated genes on autosomes. Lactylated in macrophages by EP300/P300 by using lactoyl-CoA directly derived from endogenous or exogenous lactate, leading to stimulates gene transcription.

It localises to the nucleus. It is found in the chromosome. Core component of nucleosome. Nucleosomes wrap and compact DNA into chromatin, limiting DNA accessibility to the cellular machineries which require DNA as a template. Histones thereby play a central role in transcription regulation, DNA repair, DNA replication and chromosomal stability. DNA accessibility is regulated via a complex set of post-translational modifications of histones, also called histone code, and nucleosome remodeling. The sequence is that of Histone H2A type 1-C from Homo sapiens (Human).